The following is a 147-amino-acid chain: Small ribosomal subunit protein bS6 (147 aa).

Positions 114–147 (GKGTRAAEQAAAAEAAAPAAAPAEPASAEPAPAV) are disordered. A compositionally biased stretch (low complexity) spans 119–147 (AAEQAAAAEAAAPAAAPAEPASAEPAPAV).

Belongs to the bacterial ribosomal protein bS6 family.

Its function is as follows. Binds together with bS18 to 16S ribosomal RNA. The sequence is that of Small ribosomal subunit protein bS6 from Koribacter versatilis (strain Ellin345).